The sequence spans 302 residues: Aspartate carbamoyltransferase catalytic subunit (302 aa).

Carbamoyl phosphate contacts are provided by Arg51 and Thr52. Lys80 lines the L-aspartate pocket. The carbamoyl phosphate site is built by Arg101, His129, and Gln132. L-aspartate contacts are provided by Arg162 and Arg224. Positions 263 and 264 each coordinate carbamoyl phosphate.

Belongs to the aspartate/ornithine carbamoyltransferase superfamily. ATCase family. Heterododecamer (2C3:3R2) of six catalytic PyrB chains organized as two trimers (C3), and six regulatory PyrI chains organized as three dimers (R2).

The enzyme catalyses carbamoyl phosphate + L-aspartate = N-carbamoyl-L-aspartate + phosphate + H(+). It functions in the pathway pyrimidine metabolism; UMP biosynthesis via de novo pathway; (S)-dihydroorotate from bicarbonate: step 2/3. Catalyzes the condensation of carbamoyl phosphate and aspartate to form carbamoyl aspartate and inorganic phosphate, the committed step in the de novo pyrimidine nucleotide biosynthesis pathway. This is Aspartate carbamoyltransferase catalytic subunit from Azobacteroides pseudotrichonymphae genomovar. CFP2.